The chain runs to 154 residues: Egg-lysin (154 aa).

Positions 1–18 (MKLLVLCIFAMMATLAMS) are cleaved as a signal peptide.

Homodimer. In terms of tissue distribution, sperm.

Functionally, dissolves the egg vitelline layer nonenzymatically during fertilization. It creates a hole of about 3 mu-m in diameter through which the sperm pass. The chain is Egg-lysin from Haliotis sorenseni (White abalone).